Consider the following 119-residue polypeptide: Ribonuclease P protein component (119 aa).

Belongs to the RnpA family. Consists of a catalytic RNA component (M1 or rnpB) and a protein subunit.

It carries out the reaction Endonucleolytic cleavage of RNA, removing 5'-extranucleotides from tRNA precursor.. Functionally, RNaseP catalyzes the removal of the 5'-leader sequence from pre-tRNA to produce the mature 5'-terminus. It can also cleave other RNA substrates such as 4.5S RNA. The protein component plays an auxiliary but essential role in vivo by binding to the 5'-leader sequence and broadening the substrate specificity of the ribozyme. This is Ribonuclease P protein component from Streptococcus pyogenes serotype M1.